Here is a 333-residue protein sequence, read N- to C-terminus: 5-formaminoimidazole-4-carboxamide-1-(beta)-D-ribofuranosyl 5'-monophosphate synthetase (333 aa).

5-amino-1-(5-phospho-beta-D-ribosyl)imidazole-4-carboxamide contacts are provided by H21 and S84. The 196-residue stretch at 118–313 (MELLAAAGIP…YFDEPMDMGE (196 aa)) folds into the ATP-grasp domain. ATP-binding positions include 141–187 (PVIV…VPAY) and E209. A 5-amino-1-(5-phospho-beta-D-ribosyl)imidazole-4-carboxamide-binding site is contributed by N229. Residues E268 and E281 each contribute to the Mg(2+) site.

This sequence belongs to the phosphohexose mutase family. Mg(2+) serves as cofactor. It depends on Mn(2+) as a cofactor.

The catalysed reaction is 5-amino-1-(5-phospho-beta-D-ribosyl)imidazole-4-carboxamide + formate + ATP = 5-formamido-1-(5-phospho-D-ribosyl)imidazole-4-carboxamide + ADP + phosphate. It functions in the pathway purine metabolism; IMP biosynthesis via de novo pathway; 5-formamido-1-(5-phospho-D-ribosyl)imidazole-4-carboxamide from 5-amino-1-(5-phospho-D-ribosyl)imidazole-4-carboxamide (formate route): step 1/1. Catalyzes the ATP- and formate-dependent formylation of 5-aminoimidazole-4-carboxamide-1-beta-d-ribofuranosyl 5'-monophosphate (AICAR) to 5-formaminoimidazole-4-carboxamide-1-beta-d-ribofuranosyl 5'-monophosphate (FAICAR) in the absence of folates. The sequence is that of 5-formaminoimidazole-4-carboxamide-1-(beta)-D-ribofuranosyl 5'-monophosphate synthetase from Pyrobaculum calidifontis (strain DSM 21063 / JCM 11548 / VA1).